The sequence spans 753 residues: Probable dipeptidyl peptidase 4 (753 aa).

A signal peptide spans 1–18 (MKTSQFLSLLLLAGIAQA). 3 N-linked (GlcNAc...) asparagine glycosylation sites follow: N84, N114, and N222. Catalysis depends on charge relay system residues S616, D668, and H703.

This sequence belongs to the peptidase S9B family.

It localises to the secreted. The enzyme catalyses Release of an N-terminal dipeptide, Xaa-Yaa-|-Zaa-, from a polypeptide, preferentially when Yaa is Pro, provided Zaa is neither Pro nor hydroxyproline.. Its function is as follows. Extracellular dipeptidyl-peptidase which removes N-terminal dipeptides sequentially from polypeptides having unsubstituted N-termini provided that the penultimate residue is proline. Contributes to pathogenicity. The polypeptide is Probable dipeptidyl peptidase 4 (DPP4) (Trichophyton verrucosum (strain HKI 0517)).